A 341-amino-acid chain; its full sequence is S-adenosylmethionine:tRNA ribosyltransferase-isomerase (341 aa).

It belongs to the QueA family. As to quaternary structure, monomer.

Its subcellular location is the cytoplasm. It catalyses the reaction 7-aminomethyl-7-carbaguanosine(34) in tRNA + S-adenosyl-L-methionine = epoxyqueuosine(34) in tRNA + adenine + L-methionine + 2 H(+). It functions in the pathway tRNA modification; tRNA-queuosine biosynthesis. In terms of biological role, transfers and isomerizes the ribose moiety from AdoMet to the 7-aminomethyl group of 7-deazaguanine (preQ1-tRNA) to give epoxyqueuosine (oQ-tRNA). In Clostridium perfringens (strain SM101 / Type A), this protein is S-adenosylmethionine:tRNA ribosyltransferase-isomerase.